We begin with the raw amino-acid sequence, 422 residues long: Serpin A11 (422 aa).

The signal sequence occupies residues 1–24; that stretch reads MGPVWLWLLIAELLLPVHYQPSSA. The disordered stretch occupies residues 25 to 45; that stretch reads HGDKSLGAPQPASHQSLEPAP. N-linked (GlcNAc...) asparagine glycans are attached at residues asparagine 106, asparagine 169, asparagine 350, and asparagine 385.

This sequence belongs to the serpin family.

It localises to the secreted. The sequence is that of Serpin A11 (Serpina11) from Rattus norvegicus (Rat).